The sequence spans 1201 residues: Potassium/sodium hyperpolarization-activated cyclic nucleotide-gated channel 4 (1201 aa).

The Cytoplasmic segment spans residues 1–263; it reads MDKLPPSMRK…IIHPYSDFRF (263 aa). A disordered region spans residues 24 to 183; sequence WIMDEEEDGE…PASASCEQPS (160 aa). The segment covering 26 to 36 has biased composition (acidic residues); it reads MDEEEDGEEEG. Positions 105-118 are enriched in gly residues; the sequence is SRGGGSGGAGGGSS. The segment covering 121–132 has biased composition (basic and acidic residues); sequence HLHDSAEERRLI. Serine 139 carries the post-translational modification Phosphoserine. The span at 164–174 shows a compositional bias: pro residues; sequence ASPPPQQPPQP. The involved in subunit assembly stretch occupies residues 209-260; the sequence is GQSGFMQRQFGAMLQPGVNKFSLRMFGSQKAVEREQERVKSAGFWIIHPYSD. A helical membrane pass occupies residues 264–286; the sequence is YWDLTMLLLMVGNLIIIPVGITF. The Extracellular portion of the chain corresponds to 287 to 293; it reads FKDENTT. A helical transmembrane segment spans residues 294–314; sequence PWIVFNVVSDTFFLIDLVLNF. The Cytoplasmic segment spans residues 315-336; it reads RTGIVVEDNTEIILDPQRIKMK. A helical membrane pass occupies residues 337–359; sequence YLKSWFVVDFISSIPVDYIFLIV. At 360 to 378 the chain is on the extracellular side; the sequence is ETRIDSEVYKTARALRIVR. A helical; Voltage-sensor membrane pass occupies residues 379 to 399; that stretch reads FTKILSLLRLLRLSRLIRYIH. Residues 400–413 lie on the Cytoplasmic side of the membrane; the sequence is QWEEIFHMTYDLAS. Residues 414-436 traverse the membrane as a helical segment; it reads AVVRIVNLIGMMLLLCHWDGCLQ. At 437-464 the chain is on the extracellular side; the sequence is FLVPMLQDFPHDCWVSINGMVNNSWGKQ. Asparagine 458 is a glycosylation site (N-linked (GlcNAc...) asparagine). Residues 465-486 constitute an intramembrane region (pore-forming); that stretch reads YSYALFKAMSHMLCIGYGRQAP. Over 487 to 491 the chain is Extracellular; that stretch reads VGMSD. Residues 492 to 517 traverse the membrane as a helical segment; that stretch reads VWLTMLSMIVGATCYAMFIGHATALI. At 518 to 1201 the chain is on the cytoplasmic side; that stretch reads QSLDSSRRQY…PVRSKLPSNL (684 aa). 4 residues coordinate 3',5'-cyclic GMP: tyrosine 559, lysine 562, phenylalanine 564, and glutamate 566. Positions 659, 660, 662, 669, 670, 673, and 710 each coordinate 3',5'-cyclic AMP. 2 disordered regions span residues 804–902 and 914–1201; these read AIFR…TAAA and ALGG…PSNL. Low complexity-rich tracts occupy residues 831–856 and 866–880; these read SLIP…SSSS and SAPP…SSSS. The segment covering 881 to 894 has biased composition (pro residues); sequence SPPPGACGSPPAPT. Composition is skewed to low complexity over residues 915–939 and 967–995; these read LGGS…SPQA and RSPS…SSTP. Pro residues predominate over residues 1029–1042; that stretch reads GHSPGPPRTFPSAP. A compositionally biased stretch (low complexity) spans 1045–1056; the sequence is ASGSHGSLLLPP. Phosphoserine occurs at positions 1105 and 1108. Over residues 1122 to 1134 the composition is skewed to gly residues; that stretch reads AGGGSGSSGGLGP.

It belongs to the potassium channel HCN family. Homotetramer. The potassium channel is composed of a homo- or heterotetrameric complex of pore-forming subunits. Interacts with PEX5L with a 4:4 HCN4:PEX5L stoichiometry; reduces the effects of cAMP on the voltage-dependence and rate of activation. Interacts with IRAG1; regulates HCN4 channel activity. Interacts with IRAG2; regulates HCN4 channel activity. In terms of processing, S-palmitoylated. Detected in a subset of elongated cells in taste buds.

Its subcellular location is the cell membrane. The enzyme catalyses K(+)(in) = K(+)(out). It carries out the reaction Na(+)(in) = Na(+)(out). Its activity is regulated as follows. Activated by cAMP, and to a lesser extent by cGMP and cCMP. cAMP binding causes a conformation change that leads to the assembly of an active tetramer and channel opening. Binding of cAMP removes a tonic inhibition conferred by cyclic nucleotide-binding domain (CNBD) on channel opening. Cyclic dinucleotides can modulate HCN4 channel; cyclic dinucleotides acting as potent antagonists of cAMP. Inhibited by extracellular Cs(+) ions. Auxiliary subunits can also regulate HCN4 channel. IRAG1 causes a gain-of-function by shifting HCN4 activation to more depolarized membrane potentials in the absence of cAMP. In contrast, IRAG2 causes a loss-of-function by inhibiting cAMP-dependent potentiation of HCN4 activation. Its function is as follows. Hyperpolarization-activated ion channel that are permeable to Na(+) and K(+) ions with very slow activation and inactivation. Exhibits higher selectivity for K(+) over Na(+) ions. Contributes to the native pacemaker currents in heart (If) that regulate the rhythm of heart beat. Contributes to the native pacemaker currents in neurons (Ih). May mediate responses to sour stimuli. The polypeptide is Potassium/sodium hyperpolarization-activated cyclic nucleotide-gated channel 4 (Hcn4) (Mus musculus (Mouse)).